A 61-amino-acid polypeptide reads, in one-letter code: Conotoxin Vn5.3 (61 aa).

The signal sequence occupies residues 1–19; sequence MHCLPVFVILLLLIASAPG. A propeptide spanning residues 20 to 50 is cleaved from the precursor; that stretch reads VDVQPKTKNFMTRASLRDFAKKTPKRLSKLR.

Belongs to the conotoxin T superfamily. Post-translationally, contains 2 disulfide bonds that can be either 'C1-C3, C2-C4' or 'C1-C4, C2-C3', since these disulfide connectivities have been observed for conotoxins with cysteine framework V (for examples, see AC P0DQQ7 and AC P81755). Expressed by the venom duct.

The protein resides in the secreted. The protein is Conotoxin Vn5.3 of Conus ventricosus (Mediterranean cone).